A 766-amino-acid polypeptide reads, in one-letter code: Transcription factor GTE4 (766 aa).

Disordered stretches follow at residues 87–108 (GTNS…PGDD), 234–262 (RDTT…PMEE), and 388–412 (GDKL…GDVG). Residues 238–250 (DAQQPAGLTSDSA) are compositionally biased toward polar residues. The Bromo domain occupies 416–522 (GAGTKVFKNC…QIFEERWAVI (107 aa)). Disordered stretches follow at residues 544–606 (TMRS…NKRD) and 687–766 (ARAE…SDQT). The span at 574-589 (PTTTPGRTPTSATPSG) shows a compositional bias: low complexity. The NET domain occupies 597-678 (PKANEPNKRD…NYKKGLSKKK (82 aa)). The segment covering 736-766 (SRSSSSSSSSSSSSSSDSDSDSSSSSGSDQT) has biased composition (low complexity).

As to expression, ubiquitously expressed.

Its subcellular location is the nucleus. Functionally, involved in the activation and maintenance of cell division in the meristems and by this controls cell numbers in differentiated organs. Its action in cell cycle regulation may be directed through the RB-E2F pathway. In Arabidopsis thaliana (Mouse-ear cress), this protein is Transcription factor GTE4 (GTE4).